A 92-amino-acid polypeptide reads, in one-letter code: Small ribosomal subunit protein uS19 (92 aa).

Belongs to the universal ribosomal protein uS19 family.

In terms of biological role, protein S19 forms a complex with S13 that binds strongly to the 16S ribosomal RNA. This Rhodopseudomonas palustris (strain BisA53) protein is Small ribosomal subunit protein uS19.